A 192-amino-acid chain; its full sequence is uncharacterized protein (192 aa).

An N-terminal signal peptide occupies residues 1–17 (MFKKILFPLVALFMLAG). Residue Cys-18 is the site of N-palmitoyl cysteine attachment. Cys-18 carries S-diacylglycerol cysteine lipidation.

To H.influenzae HI_0162.

Its subcellular location is the cell membrane. This is an uncharacterized protein from Escherichia coli O6:H1 (strain CFT073 / ATCC 700928 / UPEC).